The following is a 523-amino-acid chain: Putative glycerol-3-phosphate transporter 1 (523 aa).

12 helical membrane passes run 29–49 (LSYSAYQAIVLIVTFLAYASY), 102–122 (VLLGEIDVAFLAVYAFGMYFA), 133–153 (IFLTVGMIGTGLFTSLFGVGY), 163–183 (FLIMQMLAGLFQSSGWPSVVA), 196–216 (LIMGIWNAHTSVGNITGSLIA), 228–248 (FVVPGVIIVVIGLVNYAFLPV), 306–326 (FALCLFFAKLVAYTFLYWLPF), 344–364 (GNLSTMFDVGGVVGGIMAGYI), 368–388 (IGARAITAASFMYCSIPALFF), 402–422 (SLMFLTGMLVNGPYALITTAV), 444–464 (AIIDGTGSVGAAVGPLLTGYI), and 468–488 (GSWTAVFTMLMGAAFVAGLLL).

This sequence belongs to the major facilitator superfamily. Organophosphate:Pi antiporter (OPA) (TC 2.A.1.4) family.

The protein localises to the membrane. In Arabidopsis thaliana (Mouse-ear cress), this protein is Putative glycerol-3-phosphate transporter 1.